The chain runs to 1075 residues: Disheveled-associated activator of morphogenesis 2 (1075 aa).

Positions 40 to 416 (VPIPPTEELN…QIVLQDERGD (377 aa)) constitute a GBD/FH3 domain. Residues 437–517 (NENEVKQWRD…VAQLNEYSQG (81 aa)) adopt a coiled-coil conformation. 3 disordered regions span residues 517–611 (GGSI…IPQP), 1006–1025 (KEQR…SISE), and 1048–1075 (SKLK…KLNY). Over residues 523 to 532 (PAPPPPPPGG) the composition is skewed to pro residues. Positions 533–544 (PLALSSALSSAL) are enriched in low complexity. Positions 550-581 (PPLPPPLPFSSCPPPPAPPPPPGGPPPPPGAP) are enriched in pro residues. Positions 605-1075 (KKSIPQPSHP…RERVVTKLNY (471 aa)) constitute an FH2 domain. Positions 1025–1075 (EETGEFDDLVSALRSGEVFDKDLSKLKRNRKRSGNQGLETSRERVVTKLNY) constitute a DAD domain. Positions 1064-1075 (TSRERVVTKLNY) are enriched in basic and acidic residues.

The protein belongs to the formin homology family. In terms of tissue distribution, expressed in progenitor populations of the embryonic spinal cord (at protein level).

Key regulator of the Wnt signaling pathway, which is required for various processes during development, such as dorsal patterning, determination of left/right symmetry or myelination in the central nervous system. Acts downstream of Wnt ligands and upstream of beta-catenin (CTNNB1). Required for canonical Wnt signaling pathway during patterning in the dorsal spinal cord by promoting the aggregation of Disheveled (Dvl) complexes, thereby clustering and formation of Wnt receptor signalosomes and potentiating Wnt activity. During dorsal patterning of the spinal cord, inhibits oligodendrocytes differentiation via interaction with PIP5K1A. Also regulates non-canonical Wnt signaling pathway. Acts downstream of PITX2 in the developing gut and is required for left/right asymmetry within dorsal mesentery: affects mesenchymal condensation by lengthening cadherin-based junctions through WNT5A and non-canonical Wnt signaling, inducing polarized condensation in the left dorsal mesentery necessary to initiate gut rotation. Together with DAAM1, required for myocardial maturation and sarcomere assembly. This chain is Disheveled-associated activator of morphogenesis 2, found in Gallus gallus (Chicken).